A 261-amino-acid polypeptide reads, in one-letter code: Rho-related GTP-binding protein RhoU (261 aa).

The interval 1 to 48 (MAPQQGRPALPARCEPPAAPPVPPRRERGGRGARGPGVSGGRGRAGGA) is disordered. The span at 7-16 (RPALPARCEP) shows a compositional bias: low complexity. The span at 32–48 (GARGPGVSGGRGRAGGA) shows a compositional bias: gly residues. Residues 59-66 (GDGAVGKT), 106-110 (DTAGQ), and 164-167 (TQSD) each bind GTP. Glycyl lysine isopeptide (Lys-Gly) (interchain with G-Cter in ubiquitin) cross-links involve residues K180 and K251. C259 carries S-palmitoyl cysteine lipidation.

The protein belongs to the small GTPase superfamily. Rho family. In terms of assembly, interacts with PAK1. Interacts with PAK3. Interacts with ARHGAP30 in a GTP-independent manner. In its GTP-loaded conformation, interacts with ARHGAP31. Interacts with PTK2B/PYK2. Interacts with PAK4; interaction protects RHOU from ubiquitination and subsequent degradation. Mg(2+) is required as a cofactor. In terms of processing, tyrosine phosphorylated by SRC in response to PTK2B/PYK2 activation. Post-translationally, ubiquitinated. 'Lys-48'-linked ubiquitination at Lys-180 and Lys-251 by the ECS(RAB40A) complex leading to its degradation.

The protein resides in the cell membrane. It localises to the golgi apparatus membrane. It is found in the cell junction. Its subcellular location is the focal adhesion. The protein localises to the cell projection. The protein resides in the podosome. Functionally, binds to and activates protein kinase PAK1. Plays a role in the regulation of cell morphology, cytoskeletal organization and focal adhesion assembly during cell migration. Also stimulates quiescent cells to reenter the cell cycle. Has no detectable GTPase activity but its high intrinsic guanine nucleotide exchange activity suggests it is constitutively GTP-bound. This chain is Rho-related GTP-binding protein RhoU, found in Mus musculus (Mouse).